The primary structure comprises 302 residues: MPKSVSSHISLATSTGRSGPRDIRRCLSSRLRSVPPGARSASVSSKHRNGLRKFISDKVFFSILSHRHELGVDFLREMETPICTSKTVMLPLDLSTVAPGRCVSLSPFGHSSNMGFQCALCPSTENPTVAQGSRPQTMVGDALKKNNELCSVALAFYHHADKVIQHKTFYLSLLSHSMDVVRQSFLQPGLLYANLVLKTFGHDPLPIFTTNNGMLTMCILFKTRALHLGETALRLLMDNLPNYKISADCCRQSYVVKFVPTHPDTASIAVQVHTICEAVAALDCTDEMRDDIQKGTALVNAL.

Positions 1-17 (MPKSVSSHISLATSTGR) are enriched in polar residues. The disordered stretch occupies residues 1-22 (MPKSVSSHISLATSTGRSGPRD). A CCCH-type zinc finger spans residues 102-227 (CVSLSPFGHS…CILFKTRALH (126 aa)).

The protein belongs to the herpesviridae NEC1 protein family. As to quaternary structure, forms a heterohexameric complex with NEC2. Interacts with capsid vertex specific component 2/CVC2; this interaction directs the capsid to the host inner nuclear membrane to initiate budding. Phosphorylated at serine residues in the N-terminus. This phosphorylation regulates the localization within the inner nuclear membrane.

Its subcellular location is the host nucleus inner membrane. Functionally, plays an essential role in virion nuclear egress, the first step of virion release from infected cell. Within the host nucleus, NEC1 interacts with the newly formed capsid through the vertexes and directs it to the inner nuclear membrane by associating with NEC2. Induces the budding of the capsid at the inner nuclear membrane as well as its envelopment into the perinuclear space. There, the NEC1/NEC2 complex promotes the fusion of the enveloped capsid with the outer nuclear membrane and the subsequent release of the viral capsid into the cytoplasm where it will reach the secondary budding sites in the host Golgi or trans-Golgi network. The chain is Nuclear egress protein 1 from Homo sapiens (Human).